The chain runs to 264 residues: Proliferating cell nuclear antigen 2 (264 aa).

A DNA-binding region spans residues 61–80; sequence RCDRNLSMGMNLGNMSKMLK.

The protein belongs to the PCNA family. In terms of assembly, homo- and heterotrimer. Interacts with POLH, ATXR5 and ATXR6.

The protein localises to the nucleus. Functionally, this protein is an auxiliary protein of DNA polymerase delta and is involved in the control of eukaryotic DNA replication by increasing the polymerase's processibility during elongation of the leading strand. May be involved in UV resistance. This Arabidopsis thaliana (Mouse-ear cress) protein is Proliferating cell nuclear antigen 2 (PCNA2).